Here is a 269-residue protein sequence, read N- to C-terminus: Phosphonoacetaldehyde hydrolase (269 aa).

The active-site Nucleophile is Asp-10. Mg(2+) contacts are provided by Asp-10 and Ala-12. The active-site Schiff-base intermediate with substrate is the Lys-52. Mg(2+) is bound at residue Asp-186.

It belongs to the HAD-like hydrolase superfamily. PhnX family. As to quaternary structure, homodimer. Mg(2+) is required as a cofactor.

The catalysed reaction is phosphonoacetaldehyde + H2O = acetaldehyde + phosphate + H(+). Functionally, involved in phosphonate degradation. The protein is Phosphonoacetaldehyde hydrolase of Salmonella paratyphi A (strain ATCC 9150 / SARB42).